Consider the following 239-residue polypeptide: MSKPDLDAFLHGDDAALRETNRRLESMPAEDRVRWALEHLPPQHVLSSSFGTQSAVMLHLVSRQMPEIPVILVDTGYLFPETYRLVDALTDRFGLNLKVYRPALSPAWQEAGLGRLWEQGADGIERYNRLNKIDPMERALRDLDAGTWFAGLRRQQANSRAELPVLRRQDGRIKFHPIIDWHRPRRARYLRRHDLPDHPLRDQGYVSIGDVHTTVPLLPGMLEEETRFFGIKRECGLHR.

Residue C235 is the Nucleophile; cysteine thiosulfonate intermediate of the active site.

It belongs to the PAPS reductase family. CysH subfamily.

It localises to the cytoplasm. The catalysed reaction is [thioredoxin]-disulfide + sulfite + adenosine 3',5'-bisphosphate + 2 H(+) = [thioredoxin]-dithiol + 3'-phosphoadenylyl sulfate. It functions in the pathway sulfur metabolism; hydrogen sulfide biosynthesis; sulfite from sulfate: step 3/3. In terms of biological role, catalyzes the formation of sulfite from phosphoadenosine 5'-phosphosulfate (PAPS) using thioredoxin as an electron donor. In Thiocapsa roseopersicina, this protein is Phosphoadenosine 5'-phosphosulfate reductase.